Here is a 302-residue protein sequence, read N- to C-terminus: Homoserine O-acetyltransferase (302 aa).

Catalysis depends on Cys142, which acts as the Acyl-thioester intermediate. Residues Lys163 and Ser192 each coordinate substrate. His235 acts as the Proton acceptor in catalysis. Glu237 is an active-site residue. Substrate is bound at residue Arg249.

Belongs to the MetA family.

The protein resides in the cytoplasm. The catalysed reaction is L-homoserine + acetyl-CoA = O-acetyl-L-homoserine + CoA. Its pathway is amino-acid biosynthesis; L-methionine biosynthesis via de novo pathway; O-acetyl-L-homoserine from L-homoserine: step 1/1. Its function is as follows. Transfers an acetyl group from acetyl-CoA to L-homoserine, forming acetyl-L-homoserine. This Geobacillus sp. (strain WCH70) protein is Homoserine O-acetyltransferase.